The chain runs to 230 residues: Ribonuclease 3 (230 aa).

One can recognise an RNase III domain in the interval 5-125; it reads YSRFYNILGY…VIGAIYLDSD (121 aa). Residue Glu40 coordinates Mg(2+). The active site involves Asp44. The Mg(2+) site is built by Asp111 and Glu114. Residue Glu114 is part of the active site. A DRBM domain is found at 153–223; sequence DSKSKLQEIL…AEKMIEMLSQ (71 aa).

The protein belongs to the ribonuclease III family. In terms of assembly, homodimer. It depends on Mg(2+) as a cofactor.

The protein resides in the cytoplasm. It carries out the reaction Endonucleolytic cleavage to 5'-phosphomonoester.. In terms of biological role, digests double-stranded RNA. Involved in the processing of primary rRNA transcript to yield the immediate precursors to the large and small rRNAs (23S and 16S). Processes some mRNAs, and tRNAs when they are encoded in the rRNA operon. Processes pre-crRNA and tracrRNA of type II CRISPR loci if present in the organism. In Francisella tularensis subsp. holarctica (strain OSU18), this protein is Ribonuclease 3.